Consider the following 30-residue polypeptide: Phospholemman-like protein (30 aa).

The protein belongs to the FXYD family. Phosphorylated by protein kinase a (PK-A) and protein kinase C (PK-C). Phosphorylated in response to insulin and adrenergic stimulation.

It is found in the microsome membrane. It localises to the endoplasmic reticulum membrane. Functionally, induces a hyperpolarization-activated chloride current when expressed in Xenopus oocytes. May have a functional role in muscle contraction. This chain is Phospholemman-like protein, found in Squalus acanthias (Spiny dogfish).